The following is a 401-amino-acid chain: Subtilisin-like protease 7 (401 aa).

A signal peptide spans M1–G20. The propeptide occupies A21–N119. The region spanning K36–I118 is the Inhibitor I9 domain. An N-linked (GlcNAc...) asparagine glycan is attached at N58. Residues S129–M401 form the Peptidase S8 domain. Residues D161 and H193 each act as charge relay system in the active site. N-linked (GlcNAc...) asparagine glycosylation is found at N223 and N253. The Charge relay system role is filled by S347. N397 is a glycosylation site (N-linked (GlcNAc...) asparagine).

This sequence belongs to the peptidase S8 family.

The protein resides in the secreted. In terms of biological role, secreted subtilisin-like serine protease with keratinolytic activity that contributes to pathogenicity. This chain is Subtilisin-like protease 7 (SUB7), found in Trichophyton equinum (Horse ringworm fungus).